Here is a 334-residue protein sequence, read N- to C-terminus: Leucine-rich repeat-containing protein 39 (334 aa).

10 LRR repeats span residues 59–82 (EDGR…LLKL), 83–105 (NQLQ…IGRF), 106–128 (QHLI…IGLL), 129–151 (TRLQ…LSNC), 153–175 (SLEK…LSKL), 176–198 (LKLT…VLDM), 199–221 (PALE…LDRM), 223–244 (SLHT…IRNM), 245–269 (KNLG…EMTS), and 272–295 (FVNF…VDGE).

Interacts with MYH7 (via C-terminus). As to expression, expressed in heart and skeletal muscle (at protein level). Also detected in kidney (at protein level). Not detected in other tissues tested (at protein level).

Its subcellular location is the cytoplasm. The protein resides in the myofibril. It localises to the sarcomere. It is found in the m line. Its function is as follows. Component of the sarcomeric M-band which plays a role in myocyte response to biomechanical stress. May regulate expression of other M-band proteins via an SRF-dependent pathway. Important for normal contractile function in heart. The chain is Leucine-rich repeat-containing protein 39 from Rattus norvegicus (Rat).